Reading from the N-terminus, the 194-residue chain is Imidazoleglycerol-phosphate dehydratase (194 aa).

Belongs to the imidazoleglycerol-phosphate dehydratase family.

The protein localises to the cytoplasm. The enzyme catalyses D-erythro-1-(imidazol-4-yl)glycerol 3-phosphate = 3-(imidazol-4-yl)-2-oxopropyl phosphate + H2O. It functions in the pathway amino-acid biosynthesis; L-histidine biosynthesis; L-histidine from 5-phospho-alpha-D-ribose 1-diphosphate: step 6/9. This chain is Imidazoleglycerol-phosphate dehydratase, found in Listeria monocytogenes serovar 1/2a (strain ATCC BAA-679 / EGD-e).